A 1159-amino-acid chain; its full sequence is WASH complex subunit 5 (1159 aa).

This sequence belongs to the strumpellin family. As to quaternary structure, component of the WASH complex.

It is found in the early endosome. Acts at least in part as component of the WASH complex which seems to regulate washc1 nucleation-promoting factor (NPF) activity and is required for its membrane targeting during endosomal sorting. This Xenopus tropicalis (Western clawed frog) protein is WASH complex subunit 5.